The sequence spans 490 residues: Bifunctional protein GlmU (490 aa).

The tract at residues 1 to 241 (MSSPGDTAVL…SALVAGVNNR (241 aa)) is pyrophosphorylase. UDP-N-acetyl-alpha-D-glucosamine-binding positions include 12–15 (LAAG), Lys-26, Gln-83, 88–89 (GT), 112–114 (SGD), Gly-151, Glu-166, Asn-181, and Asn-239. Position 114 (Asp-114) interacts with Mg(2+). Asn-239 serves as a coordination point for Mg(2+). Residues 242–262 (VQLAQLGAELNRRIVAAHQLA) are linker. The N-acetyltransferase stretch occupies residues 263–490 (GVTVVDPATT…AGGRPAGEAE (228 aa)). Positions 344 and 362 each coordinate UDP-N-acetyl-alpha-D-glucosamine. The active-site Proton acceptor is His-374. UDP-N-acetyl-alpha-D-glucosamine is bound by residues Tyr-377 and Asn-388. Acetyl-CoA is bound by residues Ala-391, 397-398 (NY), Ser-416, and Ala-434. Positions 462–490 (RRKRPGSAAARAAEAAEKAAGGRPAGEAE) are disordered. Over residues 467–490 (GSAAARAAEAAEKAAGGRPAGEAE) the composition is skewed to low complexity.

In the N-terminal section; belongs to the N-acetylglucosamine-1-phosphate uridyltransferase family. It in the C-terminal section; belongs to the transferase hexapeptide repeat family. As to quaternary structure, homotrimer. Mg(2+) is required as a cofactor.

The protein resides in the cytoplasm. It catalyses the reaction alpha-D-glucosamine 1-phosphate + acetyl-CoA = N-acetyl-alpha-D-glucosamine 1-phosphate + CoA + H(+). The catalysed reaction is N-acetyl-alpha-D-glucosamine 1-phosphate + UTP + H(+) = UDP-N-acetyl-alpha-D-glucosamine + diphosphate. The protein operates within nucleotide-sugar biosynthesis; UDP-N-acetyl-alpha-D-glucosamine biosynthesis; N-acetyl-alpha-D-glucosamine 1-phosphate from alpha-D-glucosamine 6-phosphate (route II): step 2/2. It participates in nucleotide-sugar biosynthesis; UDP-N-acetyl-alpha-D-glucosamine biosynthesis; UDP-N-acetyl-alpha-D-glucosamine from N-acetyl-alpha-D-glucosamine 1-phosphate: step 1/1. Its pathway is bacterial outer membrane biogenesis; LPS lipid A biosynthesis. In terms of biological role, catalyzes the last two sequential reactions in the de novo biosynthetic pathway for UDP-N-acetylglucosamine (UDP-GlcNAc). The C-terminal domain catalyzes the transfer of acetyl group from acetyl coenzyme A to glucosamine-1-phosphate (GlcN-1-P) to produce N-acetylglucosamine-1-phosphate (GlcNAc-1-P), which is converted into UDP-GlcNAc by the transfer of uridine 5-monophosphate (from uridine 5-triphosphate), a reaction catalyzed by the N-terminal domain. This is Bifunctional protein GlmU from Mycobacterium avium (strain 104).